The following is an 85-amino-acid chain: Toxin CsE8 (85 aa).

Positions 1 to 19 are cleaved as a signal peptide; that stretch reads MNSLLMITACLVLFGTVWS. Residues 20 to 83 form the LCN-type CS-alpha/beta domain; the sequence is EKGYLVHEDT…TWPLIGKLCG (64 aa). Cystine bridges form between Cys31–Cys82, Cys35–Cys58, Cys44–Cys63, and Cys48–Cys65. Cys82 is subject to Cysteine amide.

This sequence belongs to the long (4 C-C) scorpion toxin superfamily. Sodium channel inhibitor family. Beta subfamily. As to expression, expressed by the venom gland.

Its subcellular location is the secreted. Beta toxins bind voltage-independently at site-4 of sodium channels (Nav) and shift the voltage of activation toward more negative potentials thereby affecting sodium channel activation and promoting spontaneous and repetitive firing. The sequence is that of Toxin CsE8 from Centruroides sculpturatus (Arizona bark scorpion).